A 251-amino-acid polypeptide reads, in one-letter code: tRNA (guanine-N(7)-)-methyltransferase (251 aa).

Residues Gly-72, 95-96 (EI), 132-133 (NA), and Leu-152 contribute to the S-adenosyl-L-methionine site. The active site involves Asp-155. Residue 230 to 232 (SEE) participates in S-adenosyl-L-methionine binding.

This sequence belongs to the class I-like SAM-binding methyltransferase superfamily. TrmB family.

Its subcellular location is the nucleus. The catalysed reaction is guanosine(46) in tRNA + S-adenosyl-L-methionine = N(7)-methylguanosine(46) in tRNA + S-adenosyl-L-homocysteine. It functions in the pathway tRNA modification; N(7)-methylguanine-tRNA biosynthesis. In terms of biological role, catalyzes the formation of N(7)-methylguanine at position 46 (m7G46) in tRNA. The protein is tRNA (guanine-N(7)-)-methyltransferase of Drosophila willistoni (Fruit fly).